Reading from the N-terminus, the 312-residue chain is Pyrimidine-specific ribonucleoside hydrolase RihA (312 aa).

Residue His240 is part of the active site.

It belongs to the IUNH family. RihA subfamily.

In terms of biological role, hydrolyzes cytidine or uridine to ribose and cytosine or uracil, respectively. The sequence is that of Pyrimidine-specific ribonucleoside hydrolase RihA from Citrobacter koseri (strain ATCC BAA-895 / CDC 4225-83 / SGSC4696).